Reading from the N-terminus, the 451-residue chain is Probable glycine dehydrogenase (decarboxylating) subunit 1 (451 aa).

This sequence belongs to the GcvP family. N-terminal subunit subfamily. In terms of assembly, the glycine cleavage system is composed of four proteins: P, T, L and H. In this organism, the P 'protein' is a heterodimer of two subunits.

It catalyses the reaction N(6)-[(R)-lipoyl]-L-lysyl-[glycine-cleavage complex H protein] + glycine + H(+) = N(6)-[(R)-S(8)-aminomethyldihydrolipoyl]-L-lysyl-[glycine-cleavage complex H protein] + CO2. Its function is as follows. The glycine cleavage system catalyzes the degradation of glycine. The P protein binds the alpha-amino group of glycine through its pyridoxal phosphate cofactor; CO(2) is released and the remaining methylamine moiety is then transferred to the lipoamide cofactor of the H protein. The sequence is that of Probable glycine dehydrogenase (decarboxylating) subunit 1 from Thioalkalivibrio sulfidiphilus (strain HL-EbGR7).